The following is a 434-amino-acid chain: UDP-N-acetylglucosamine 1-carboxyvinyltransferase (434 aa).

22 to 23 (KN) serves as a coordination point for phosphoenolpyruvate. UDP-N-acetyl-alpha-D-glucosamine is bound at residue R97. Residue D121 is the Proton donor of the active site. Residues D319 and M341 each contribute to the UDP-N-acetyl-alpha-D-glucosamine site.

Belongs to the EPSP synthase family. MurA subfamily.

The protein localises to the cytoplasm. It carries out the reaction phosphoenolpyruvate + UDP-N-acetyl-alpha-D-glucosamine = UDP-N-acetyl-3-O-(1-carboxyvinyl)-alpha-D-glucosamine + phosphate. The protein operates within cell wall biogenesis; peptidoglycan biosynthesis. Functionally, cell wall formation. Adds enolpyruvyl to UDP-N-acetylglucosamine. This Bacteroides fragilis (strain ATCC 25285 / DSM 2151 / CCUG 4856 / JCM 11019 / LMG 10263 / NCTC 9343 / Onslow / VPI 2553 / EN-2) protein is UDP-N-acetylglucosamine 1-carboxyvinyltransferase.